The following is a 446-amino-acid chain: DNA repair protein RadA (446 aa).

The segment at cysteine 10–cysteine 27 adopts a C4-type zinc-finger fold. ATP is bound at residue glycine 91–serine 98. Residues lysine 250–glycine 254 carry the RadA KNRFG motif motif. Residues glutamate 349–arginine 446 are lon-protease-like.

Belongs to the RecA family. RadA subfamily.

Functionally, DNA-dependent ATPase involved in processing of recombination intermediates, plays a role in repairing DNA breaks. Stimulates the branch migration of RecA-mediated strand transfer reactions, allowing the 3' invading strand to extend heteroduplex DNA faster. Binds ssDNA in the presence of ADP but not other nucleotides, has ATPase activity that is stimulated by ssDNA and various branched DNA structures, but inhibited by SSB. Does not have RecA's homology-searching function. The polypeptide is DNA repair protein RadA (Rickettsia felis (strain ATCC VR-1525 / URRWXCal2) (Rickettsia azadi)).